The primary structure comprises 1090 residues: Leucine-rich repeat receptor-like serine/threonine-protein kinase RGI4 (1090 aa).

The N-terminal stretch at methionine 1 to phenylalanine 20 is a signal peptide. Residues phenylalanine 21–lysine 702 lie on the Extracellular side of the membrane. One copy of the LRR 1 repeat lies at leucine 36 to proline 59. N-linked (GlcNAc...) asparagine glycosylation occurs at asparagine 43. The cysteines at positions 60 and 67 are disulfide-linked. LRR repeat units follow at residues isoleucine 95–leucine 119, serine 120–leucine 143, lysine 145–asparagine 166, and valine 168–leucine 191. An N-linked (GlcNAc...) asparagine glycan is attached at asparagine 107. 4 consecutive short sequence motifs (small peptide recognition) follow at residues phenylalanine 176–aspartate 177, arginine 198–glycine 201, threonine 221–glutamate 226, and tyrosine 249. 7 LRR repeats span residues cysteine 216–leucine 240, lysine 242–cysteine 264, threonine 265–leucine 288, lysine 289–cysteine 312, glutamate 314–asparagine 335, leucine 336–cysteine 360, and lysine 362–serine 386. Residue asparagine 263 is glycosylated (N-linked (GlcNAc...) asparagine). The CLE45 peptide binding signature appears at asparagine 269–tyrosine 273. The Small peptide recognition motif lies at tyrosine 271 to tyrosine 273. 2 consecutive short sequence motifs (small peptide recognition) follow at residues aspartate 319 to glutamate 322 and glutamate 341 to glutamine 343. N-linked (GlcNAc...) asparagine glycosylation occurs at asparagine 359. 2 short sequence motifs (small peptide recognition) span residues methionine 389–tryptophan 393 and aspartate 415–tyrosine 418. LRR repeat units follow at residues cysteine 408 to isoleucine 432, asparagine 434 to cysteine 456, threonine 457 to leucine 480, lysine 481 to cysteine 504, serine 506 to proline 526, lysine 527 to leucine 550, threonine 551 to cysteine 574, serine 576 to isoleucine 598, serine 600 to serine 622, leucine 623 to leucine 646, and glutamine 647 to arginine 670. Asparagine 420 and asparagine 434 each carry an N-linked (GlcNAc...) asparagine glycan. The Small peptide recognition signature appears at lysine 437–leucine 441. An N-linked (GlcNAc...) asparagine glycan is attached at asparagine 455. The short motif at arginine 461 to arginine 463 is the Small peptide recognition element. A glycan (N-linked (GlcNAc...) asparagine) is linked at asparagine 606. N-linked (GlcNAc...) asparagine glycosylation is present at asparagine 653. The chain crosses the membrane as a helical span at residues valine 703–leucine 723. Topologically, residues valine 724–valine 1090 are cytoplasmic. Positions leucine 758–isoleucine 1040 constitute a Protein kinase domain. ATP is bound by residues isoleucine 764–valine 772 and lysine 786. Phosphotyrosine occurs at positions 829 and 869. Aspartate 882 (proton acceptor) is an active-site residue. Phosphotyrosine is present on tyrosine 932. An LRR 24 repeat occupies leucine 1037–lysine 1060. The interval lysine 1054 to serine 1079 is disordered.

This sequence belongs to the protein kinase superfamily. Ser/Thr protein kinase family. In terms of assembly, self-interacts. Interacts with RGF1; this interaction triggers its phosphorylation and ubiquitination and the formation of heterodimers with SERK1. In terms of processing, autophosphorylated. Post-translationally, phosphorylated and ubiquitinated upon interaction with RGF1, thus leading to activation a subsequent degradation. Expressed in floers, pollen grains and stipules. Present in roots.

The protein resides in the cell membrane. The enzyme catalyses L-seryl-[protein] + ATP = O-phospho-L-seryl-[protein] + ADP + H(+). It catalyses the reaction L-threonyl-[protein] + ATP = O-phospho-L-threonyl-[protein] + ADP + H(+). Functionally, receptor with a serine/threonine-protein kinase activity. Together with SKM1, LRR-rich receptor-like kinase (LRR-RLK) required for male fertility by the perception of CLE43 and CLE45 peptides and the transduction of their promoting action in pollen tubes, especially under relatively high temperature (at 30 degrees Celsius), thus conferring tolerance against high temperature probably through the maintenance of mitochondrial activity. Seems to not be involved in the perception of CLE45 peptide in roots. Together with RGI1, RGI2, RGI3, RGI4 and RGI5, acts as receptor of RGF1, a peptide hormone that maintains the postembryonic root stem cell niche by regulating the expression levels and patterns of the transcription factor PLETHORA (PLT). Links RGF1 signal with its downstream components. The protein is Leucine-rich repeat receptor-like serine/threonine-protein kinase RGI4 of Arabidopsis thaliana (Mouse-ear cress).